The following is a 468-amino-acid chain: 6-phosphogluconate dehydrogenase, decarboxylating (468 aa).

NADP(+) contacts are provided by residues 10 to 15 (GMAVMG), 33 to 35 (NRS), 74 to 76 (VKA), and N102. Substrate-binding positions include N102 and 128–130 (SGG). Catalysis depends on K183, which acts as the Proton acceptor. Substrate is bound at residue 186 to 187 (HN). The active-site Proton donor is E190. Positions 191, 260, 287, 445, and 451 each coordinate substrate.

The protein belongs to the 6-phosphogluconate dehydrogenase family. Homodimer.

The enzyme catalyses 6-phospho-D-gluconate + NADP(+) = D-ribulose 5-phosphate + CO2 + NADPH. Its pathway is carbohydrate degradation; pentose phosphate pathway; D-ribulose 5-phosphate from D-glucose 6-phosphate (oxidative stage): step 3/3. In terms of biological role, catalyzes the oxidative decarboxylation of 6-phosphogluconate to ribulose 5-phosphate and CO(2), with concomitant reduction of NADP to NADPH. In Escherichia coli (strain K12), this protein is 6-phosphogluconate dehydrogenase, decarboxylating (gnd).